The following is a 1281-amino-acid chain: Angiotensin-converting enzyme (1281 aa).

The signal sequence occupies residues 1 to 17 (MPAALGLLLPWLSLVGA). Residues 18–1241 (LQPGLEPPQS…MSVGTKQATA (1224 aa)) are Extracellular-facing. Peptidase M2 domains follow at residues 28–610 (DPTE…LGWP) and 629–1208 (IVDE…LGWP). 5 N-linked (GlcNAc...) asparagine glycosylation sites follow: Asn42, Asn62, Asn80, Asn99, and Asn148. Cys145 and Cys151 form a disulfide bridge. Residue Tyr217 coordinates chloride. Asn304 carries N-linked (GlcNAc...) asparagine glycosylation. Cys345 and Cys363 are joined by a disulfide. Zn(2+) is bound at residue His376. Residue Glu377 is the Proton acceptor 1 of the active site. The Zn(2+) site is built by His380 and Glu404. Asn495 carries N-linked (GlcNAc...) asparagine glycosylation. The active-site Proton donor 1 is His506. Arg515 lines the chloride pocket. The cysteines at positions 531 and 543 are disulfide-linked. Asn535, Asn573, Asn601, Asn643, Asn663, and Asn746 each carry an N-linked (GlcNAc...) asparagine glycan. Cysteines 743 and 749 form a disulfide. 2 residues coordinate chloride: Arg777 and Tyr815. A disulfide bond links Cys943 and Cys961. His974 contacts Zn(2+). Catalysis depends on Glu975, which acts as the Proton acceptor 2. Zn(2+) is bound by residues His978 and Glu1002. Residues Trp1076 and Arg1080 each coordinate chloride. His1104 (proton donor 2) is an active-site residue. Chloride is bound at residue Arg1113. A disulfide bridge links Cys1129 with Cys1141. Residue Asn1177 is glycosylated (N-linked (GlcNAc...) asparagine). Residues 1201–1240 (NGEVLGWPEYSWTPYAVTEFHAATDTADFLGMSVGTKQAT) form a juxtamembrane stalk region. Residues 1242-1262 (GAWVLLALALVFLITSIFLGV) traverse the membrane as a helical segment. Residues 1263-1281 (KLFSSRRKAFKSSSEMELK) are Cytoplasmic-facing.

The protein belongs to the peptidase M2 family. Zn(2+) is required as a cofactor. Requires chloride as cofactor.

It is found in the cell membrane. The protein localises to the cytoplasm. The catalysed reaction is Release of a C-terminal dipeptide, oligopeptide-|-Xaa-Yaa, when Xaa is not Pro, and Yaa is neither Asp nor Glu. Thus, conversion of angiotensin I to angiotensin II, with increase in vasoconstrictor activity, but no action on angiotensin II.. It catalyses the reaction angiotensin I + H2O = L-histidyl-L-leucine + angiotensin II. The enzyme catalyses bradykinin + H2O = L-Phe-L-Arg + bradykinin(1-7). It carries out the reaction substance P + H2O = substance P(1-9) + L-Leu-L-Met-NH2. The catalysed reaction is substance P + H2O = substance P(1-8) + Gly-L-Leu-L-Met-NH2. It catalyses the reaction substance P + H2O = L-Phe-L-Phe-Gly-L-Leu-L-Met-NH2 + substance P(1-6). The enzyme catalyses neurotensin + H2O = neurotensin(1-11) + L-isoleucyl-L-leucine. It carries out the reaction goralatide + H2O = N-acetyl-L-seryl-L-aspartate + L-lysyl-L-proline. The catalysed reaction is Met-enkephalin + H2O = L-phenylalanyl-L-methionine + L-tyrosylglycylglycine. It catalyses the reaction Leu-enkephalin + H2O = L-tyrosylglycylglycine + L-phenylalanyl-L-leucine. The enzyme catalyses Met-enkephalin-Arg-Phe + H2O = L-arginyl-L-phenylalanine + Met-enkephalin. Its function is as follows. Dipeptidyl carboxypeptidase that removes dipeptides from the C-terminus of a variety of circulating hormones, such as angiotensin I, bradykinin or enkephalins, thereby playing a key role in the regulation of blood pressure, electrolyte homeostasis or synaptic plasticity. Composed of two similar catalytic domains, each possessing a functional active site, with different selectivity for substrates. Plays a major role in the angiotensin-renin system that regulates blood pressure and sodium retention by the kidney by converting angiotensin I to angiotensin II, resulting in an increase of the vasoconstrictor activity of angiotensin. Also able to inactivate bradykinin, a potent vasodilator, and therefore enhance the blood pressure response. Acts as a regulator of synaptic transmission by mediating cleavage of neuropeptide hormones, such as substance P, neurotensin or enkephalins. Catalyzes degradation of different enkephalin neuropeptides (Met-enkephalin, Leu-enkephalin, Met-enkephalin-Arg-Phe and possibly Met-enkephalin-Arg-Gly-Leu). Also acts as a regulator of hematopoietic stem cell differentiation by mediating degradation of hemoregulatory peptide N-acetyl-SDKP (AcSDKP). In Gallus gallus (Chicken), this protein is Angiotensin-converting enzyme.